The primary structure comprises 151 residues: uncharacterized protein (151 aa).

Residues 2-133 (KTLIVEDNPK…VFVEAVHYSQ (132 aa)) enclose the Response regulatory domain. At D53 the chain carries 4-aspartylphosphate.

This is an uncharacterized protein from Sinorhizobium fredii (strain NBRC 101917 / NGR234).